The primary structure comprises 192 residues: CASP-like protein 1E1 (192 aa).

Residues 1–22 are disordered; sequence MDSQNKNSVDAMDGIESRGMKE. At 1–29 the chain is on the cytoplasmic side; it reads MDSQNKNSVDAMDGIESRGMKERGGRTNS. The chain crosses the membrane as a helical span at residues 30–50; sequence FLVLRVLAFVLTSTAAIVHGV. The Extracellular portion of the chain corresponds to 51–81; the sequence is NNQTETVPIQLTSSMPPLYVPVVAKWHYLSA. Asn52 carries an N-linked (GlcNAc...) asparagine glycan. Residues 82 to 102 traverse the membrane as a helical segment; that stretch reads FVFFVVSNAIACSYAAISVML. At 103–118 the chain is on the cytoplasmic side; it reads SFCGKKSMVPIILTLD. A helical membrane pass occupies residues 119 to 139; the sequence is LLMVALLFSSNGAATAIGVMG. At 140 to 161 the chain is on the extracellular side; that stretch reads YKGNSHVKWNKVCNVFGKFCNQ. A helical transmembrane segment spans residues 162-182; that stretch reads VAASVVLSLIGSIVFVLLVML. Over 183-192 the chain is Cytoplasmic; that stretch reads TAFRLHNKSK.

It belongs to the Casparian strip membrane proteins (CASP) family. As to quaternary structure, homodimer and heterodimers.

The protein localises to the cell membrane. This Ricinus communis (Castor bean) protein is CASP-like protein 1E1.